The chain runs to 425 residues: Kynureninase (425 aa).

Residues leucine 105, threonine 106, phenylalanine 133–aspartate 136, aspartate 218, histidine 221, and tyrosine 243 each bind pyridoxal 5'-phosphate. Lysine 244 is modified (N6-(pyridoxal phosphate)lysine). Pyridoxal 5'-phosphate-binding residues include tryptophan 274 and asparagine 302.

This sequence belongs to the kynureninase family. Homodimer. Pyridoxal 5'-phosphate serves as cofactor.

The catalysed reaction is L-kynurenine + H2O = anthranilate + L-alanine + H(+). It carries out the reaction 3-hydroxy-L-kynurenine + H2O = 3-hydroxyanthranilate + L-alanine + H(+). It functions in the pathway amino-acid degradation; L-kynurenine degradation; L-alanine and anthranilate from L-kynurenine: step 1/1. The protein operates within cofactor biosynthesis; NAD(+) biosynthesis; quinolinate from L-kynurenine: step 2/3. Functionally, catalyzes the cleavage of L-kynurenine (L-Kyn) and L-3-hydroxykynurenine (L-3OHKyn) into anthranilic acid (AA) and 3-hydroxyanthranilic acid (3-OHAA), respectively. The protein is Kynureninase of Christiangramia forsetii (strain DSM 17595 / CGMCC 1.15422 / KT0803) (Gramella forsetii).